The chain runs to 286 residues: uncharacterized protein (286 aa).

An AB hydrolase-1 domain is found at 26-268 (PLIILCHGFC…DACHYDIYEG (243 aa)).

The protein to E.coli YcjY.

This is an uncharacterized protein from Escherichia coli.